The chain runs to 115 residues: Large ribosomal subunit protein bL19 (115 aa).

The protein belongs to the bacterial ribosomal protein bL19 family.

Functionally, this protein is located at the 30S-50S ribosomal subunit interface and may play a role in the structure and function of the aminoacyl-tRNA binding site. This Buchnera aphidicola subsp. Schizaphis graminum (strain Sg) protein is Large ribosomal subunit protein bL19.